Here is a 190-residue protein sequence, read N- to C-terminus: uncharacterized protein (190 aa).

The protein belongs to the Iojap/RsfS family.

This is an uncharacterized protein from Caenorhabditis elegans.